We begin with the raw amino-acid sequence, 111 residues long: Ribosome-binding factor A (111 aa).

The protein belongs to the RbfA family. As to quaternary structure, monomer. Binds 30S ribosomal subunits, but not 50S ribosomal subunits or 70S ribosomes.

It is found in the cytoplasm. In terms of biological role, one of several proteins that assist in the late maturation steps of the functional core of the 30S ribosomal subunit. Associates with free 30S ribosomal subunits (but not with 30S subunits that are part of 70S ribosomes or polysomes). Required for efficient processing of 16S rRNA. May interact with the 5'-terminal helix region of 16S rRNA. This is Ribosome-binding factor A from Helicobacter pylori (strain ATCC 700392 / 26695) (Campylobacter pylori).